The primary structure comprises 334 residues: Large ribosomal subunit protein uL3 (334 aa).

Basic residues predominate over residues 1–10 (MGMKKNRPRR). The tract at residues 1 to 21 (MGMKKNRPRRGSLAFSPRKRA) is disordered.

Belongs to the universal ribosomal protein uL3 family. As to quaternary structure, part of the 50S ribosomal subunit. Forms a cluster with proteins L14 and L24e.

In terms of biological role, one of the primary rRNA binding proteins, it binds directly near the 3'-end of the 23S rRNA, where it nucleates assembly of the 50S subunit. This Methanococcus maripaludis (strain C5 / ATCC BAA-1333) protein is Large ribosomal subunit protein uL3.